We begin with the raw amino-acid sequence, 69 residues long: Large ribosomal subunit protein bL32c (69 aa).

The protein belongs to the bacterial ribosomal protein bL32 family.

Its subcellular location is the plastid. The protein localises to the chloroplast. The sequence is that of Large ribosomal subunit protein bL32c from Pelargonium hortorum (Common geranium).